We begin with the raw amino-acid sequence, 333 residues long: Adenosine deaminase (333 aa).

Zn(2+) contacts are provided by His-12 and His-14. Substrate is bound by residues His-14, Asp-16, and Gly-170. His-197 contacts Zn(2+). Glu-200 (proton donor) is an active-site residue. Asp-278 provides a ligand contact to Zn(2+). Asp-279 is a substrate binding site.

It belongs to the metallo-dependent hydrolases superfamily. Adenosine and AMP deaminases family. Adenosine deaminase subfamily. Zn(2+) is required as a cofactor.

The enzyme catalyses adenosine + H2O + H(+) = inosine + NH4(+). The catalysed reaction is 2'-deoxyadenosine + H2O + H(+) = 2'-deoxyinosine + NH4(+). Functionally, catalyzes the hydrolytic deamination of adenosine and 2-deoxyadenosine. The protein is Adenosine deaminase of Escherichia coli (strain SE11).